The sequence spans 464 residues: 3-deoxy-D-manno-octulosonic acid transferase (464 aa).

The helical; Signal-anchor transmembrane segment at 2–22 (MLLYYALSFILLPIYFIIILI) threads the bilayer. An RPE1 insert domain is found at 47 to 93 (YSLDFLHNEANKERFKGDTERRTAAYTSVREDSSTGSTSKLPLEASY). The active-site Proton acceptor is Glu107. Residues 311 to 312 (PR), 352 to 354 (FGE), and 377 to 380 (NILE) contribute to the CMP site.

It belongs to the glycosyltransferase group 1 family.

It localises to the cell inner membrane. The enzyme catalyses lipid IVA (E. coli) + CMP-3-deoxy-beta-D-manno-octulosonate = alpha-Kdo-(2-&gt;6)-lipid IVA (E. coli) + CMP + H(+). Its pathway is bacterial outer membrane biogenesis; LPS core biosynthesis. Involved in lipopolysaccharide (LPS) biosynthesis. Catalyzes the transfer of 3-deoxy-D-manno-octulosonate (Kdo) residue(s) from CMP-Kdo to lipid IV(A), the tetraacyldisaccharide-1,4'-bisphosphate precursor of lipid A. In Rickettsia felis (strain ATCC VR-1525 / URRWXCal2) (Rickettsia azadi), this protein is 3-deoxy-D-manno-octulosonic acid transferase (waaA).